We begin with the raw amino-acid sequence, 31 residues long: Cycloviolacin-O6 (31 aa).

The cyclopeptide (Gly-Asn) cross-link spans 1–31; that stretch reads GTLPCGESCVWIPCISAAVGCSCKSKVCYKN. 3 cysteine pairs are disulfide-bonded: Cys5-Cys21, Cys9-Cys23, and Cys14-Cys28.

In terms of processing, this is a cyclic peptide.

Functionally, probably participates in a plant defense mechanism. The sequence is that of Cycloviolacin-O6 from Viola odorata (Sweet violet).